Here is a 1171-residue protein sequence, read N- to C-terminus: Kinesin-like protein GA13060 (1171 aa).

Residues 1–24 form a disordered region; sequence MASSISRNGGFCGALQRAPPPMPP. The Kinesin motor domain occupies 40–400; the sequence is KVKVMLRVSD…IQIASRIHRL (361 aa). Disordered stretches follow at residues 737–774, 798–820, 932–955, 1043–1099, and 1124–1143; these read LLGQ…GSRD, LVAS…SQRS, PAYR…SLPS, TSSE…QRHR, and RHSH…EGNG. Basic residues predominate over residues 805–816; the sequence is SSHHQHQHHRPS. Residues 1043 to 1059 are compositionally biased toward polar residues; it reads TSSEAYDSGHDSNSTPR. Residues 1124-1139 are compositionally biased toward basic residues; the sequence is RHSHGVGGHKKHRHRH.

Belongs to the TRAFAC class myosin-kinesin ATPase superfamily. Kinesin family. KIF26 subfamily.

The protein resides in the cytoplasm. The protein localises to the cytoskeleton. The chain is Kinesin-like protein GA13060 from Drosophila pseudoobscura pseudoobscura (Fruit fly).